The chain runs to 262 residues: Inactive snake venom serine proteinase 13 (262 aa).

Positions 1–18 (MGLIRVLANLLILQLSYA) are cleaved as a signal peptide. Positions 19 to 24 (QKSSEL) are excised as a propeptide. The Peptidase S1 domain maps to 25–250 (VIGGDECNIN…HLDWIQSIIA (226 aa)). Intrachain disulfides connect cysteine 31–cysteine 162, cysteine 49–cysteine 65, cysteine 97–cysteine 257, cysteine 141–cysteine 211, cysteine 173–cysteine 190, and cysteine 201–cysteine 226. 3 N-linked (GlcNAc...) asparagine glycosylation sites follow: asparagine 78, asparagine 102, and asparagine 153.

This sequence belongs to the peptidase S1 family. Snake venom subfamily. As to quaternary structure, monomer. As to expression, expressed by the venom gland.

Its subcellular location is the secreted. This Crotalus adamanteus (Eastern diamondback rattlesnake) protein is Inactive snake venom serine proteinase 13.